A 253-amino-acid chain; its full sequence is Pupal cuticle protein (253 aa).

The N-terminal stretch at 1 to 18 (MKSMIVVACLALACGAHA) is a signal peptide. The segment covering 54–66 (LQQASKNNPNPND) has biased composition (polar residues). A disordered region spans residues 54–74 (LQQASKNNPNPNDDGSYDPRW). A run of 3 repeats spans residues 97-100 (AAPA), 115-118 (AAPA), and 154-157 (AAPA). Low complexity predominate over residues 155-167 (APAQQQWNAPAHQ). Disordered stretches follow at residues 155 to 178 (APAQ…QDWN) and 187 to 206 (APAH…APAH). The span at 189 to 201 (AHQSWNGAPSWQS) shows a compositional bias: polar residues.

In terms of biological role, component of the cuticle of the pupae of silk moth. The sequence is that of Pupal cuticle protein (PCP) from Bombyx mori (Silk moth).